A 65-amino-acid chain; its full sequence is Large ribosomal subunit protein bL32 (65 aa).

It belongs to the bacterial ribosomal protein bL32 family.

The polypeptide is Large ribosomal subunit protein bL32 (Phytoplasma australiense).